The following is a 352-amino-acid chain: Protein RecA (352 aa).

74–81 (GPESSGKT) provides a ligand contact to ATP.

The protein belongs to the RecA family.

The protein localises to the cytoplasm. Can catalyze the hydrolysis of ATP in the presence of single-stranded DNA, the ATP-dependent uptake of single-stranded DNA by duplex DNA, and the ATP-dependent hybridization of homologous single-stranded DNAs. It interacts with LexA causing its activation and leading to its autocatalytic cleavage. This Ralstonia nicotianae (strain ATCC BAA-1114 / GMI1000) (Ralstonia solanacearum) protein is Protein RecA.